Reading from the N-terminus, the 308-residue chain is Protoheme IX farnesyltransferase (308 aa).

The next 8 membrane-spanning stretches (helical) occupy residues 31–51, 53–73, 102–122, 124–144, 149–169, 170–190, 240–260, and 288–308; these read VIELLLVTAIPAMLLAQRGTV, PLLIVNTLIGGMLAAGGANAL, NALVFGLVLTAGSFLWLWWTT, LLSGLLALATIAFYVFIYTLL, TSQNVVWGGAAGCMPVMIGWS, AVTGTIQWPALVMFAIIFFWT, LALATGWLYAAVALVAGVWFL, and YLAVVFCALAIDSAIGLPHLF.

It belongs to the UbiA prenyltransferase family. Protoheme IX farnesyltransferase subfamily.

Its subcellular location is the cell membrane. It catalyses the reaction heme b + (2E,6E)-farnesyl diphosphate + H2O = Fe(II)-heme o + diphosphate. It participates in porphyrin-containing compound metabolism; heme O biosynthesis; heme O from protoheme: step 1/1. Its function is as follows. Converts heme B (protoheme IX) to heme O by substitution of the vinyl group on carbon 2 of heme B porphyrin ring with a hydroxyethyl farnesyl side group. The protein is Protoheme IX farnesyltransferase of Mycolicibacterium paratuberculosis (strain ATCC BAA-968 / K-10) (Mycobacterium paratuberculosis).